Consider the following 401-residue polypeptide: L-rhamnonate dehydratase (401 aa).

Residues His-29 and Arg-55 each coordinate substrate. Mg(2+) is bound by residues Asp-222, Glu-248, and Glu-276. The active-site Proton acceptor is the His-325. Glu-345 serves as a coordination point for substrate.

This sequence belongs to the mandelate racemase/muconate lactonizing enzyme family. RhamD subfamily. As to quaternary structure, homooctamer; tetramer of dimers. Requires Mg(2+) as cofactor.

It carries out the reaction L-rhamnonate = 2-dehydro-3-deoxy-L-rhamnonate + H2O. Catalyzes the dehydration of L-rhamnonate to 2-keto-3-deoxy-L-rhamnonate (KDR). The chain is L-rhamnonate dehydratase from Klebsiella pneumoniae (strain 342).